The primary structure comprises 261 residues: Rhomboid-type serine protease 2 (261 aa).

5 consecutive transmembrane segments (helical) span residues 17–37 (LTAGLSVFLTLVYVLNWVFPI), 58–78 (LYPLAHLSIFHLLLNLMSLFV), 94–114 (ITLNLLAIVTGVVYCLVGMLL), 116–136 (PNVYVGGASGWCFTLCGYFAV), and 155–175 (LYIPLVFLVLVTLLMPGSSFV). Serine 124 (nucleophile) is an active-site residue. Residue histidine 177 is part of the active site.

It belongs to the peptidase S54 family.

The protein resides in the golgi apparatus membrane. The protein localises to the golgi apparatus. Its subcellular location is the cis-Golgi network membrane. The catalysed reaction is Cleaves type-1 transmembrane domains using a catalytic dyad composed of serine and histidine that are contributed by different transmembrane domains.. Functionally, probable rhomboid-type serine protease that catalyzes intramembrane proteolysis. The chain is Rhomboid-type serine protease 2 (RBD2) from Eremothecium gossypii (strain ATCC 10895 / CBS 109.51 / FGSC 9923 / NRRL Y-1056) (Yeast).